Here is a 560-residue protein sequence, read N- to C-terminus: Putative transport protein VP1232 (560 aa).

Helical transmembrane passes span 8–28, 37–57, 66–86, 91–111, and 164–184; these read LLDQ…LAIG, LGNS…GFSF, FMLF…GIFF, HYFI…YGLS, and VGYA…AKLL. 2 RCK C-terminal domains span residues 205 to 292 and 293 to 376; these read LGNS…FRNG and KEVF…KIGF. 6 helical membrane-spanning segments follow: residues 386 to 406, 409 to 429, 443 to 463, 478 to 498, 506 to 526, and 539 to 559; these read LLAF…TMTF, VSFS…LGFL, ALNM…GLSA, VIGL…LVGA, ALLF…DVVN, and AGTY…LIIL.

The protein belongs to the AAE transporter (TC 2.A.81) family. YbjL subfamily.

The protein localises to the cell membrane. The sequence is that of Putative transport protein VP1232 from Vibrio parahaemolyticus serotype O3:K6 (strain RIMD 2210633).